The chain runs to 116 residues: Transcription elongation factor SPT4 homolog 2 (116 aa).

Residues cysteine 19–cysteine 39 form a C4-type zinc finger.

This sequence belongs to the SPT4 family.

Its subcellular location is the nucleus. Its function is as follows. May regulate transcription elongation by RNA polymerase II. May enhance transcriptional pausing at sites proximal to the promoter, which may in turn facilitate the assembly of an elongation competent RNA polymerase II complex. The polypeptide is Transcription elongation factor SPT4 homolog 2 (Arabidopsis thaliana (Mouse-ear cress)).